A 24-amino-acid polypeptide reads, in one-letter code: Cytochrome c oxidase subunit 7A2, mitochondrial (24 aa).

The segment covering 1–13 has biased composition (basic and acidic residues); that stretch reads FENKVPEKQKLFQ. The tract at residues 1–24 is disordered; the sequence is FENKVPEKQKLFQEDNGIPVHLKG. K10 bears the N6-acetyllysine mark.

Belongs to the cytochrome c oxidase VIIa family. Component of the cytochrome c oxidase (complex IV, CIV), a multisubunit enzyme composed of 14 subunits. The complex is composed of a catalytic core of 3 subunits MT-CO1, MT-CO2 and MT-CO3, encoded in the mitochondrial DNA, and 11 supernumerary subunits COX4I, COX5A, COX5B, COX6A, COX6B, COX6C, COX7A, COX7B, COX7C, COX8 and NDUFA4, which are encoded in the nuclear genome. The complex exists as a monomer or a dimer and forms supercomplexes (SCs) in the inner mitochondrial membrane with NADH-ubiquinone oxidoreductase (complex I, CI) and ubiquinol-cytochrome c oxidoreductase (cytochrome b-c1 complex, complex III, CIII), resulting in different assemblies (supercomplex SCI(1)III(2)IV(1) and megacomplex MCI(2)III(2)IV(2)). Interacts with PET100.

The protein resides in the mitochondrion inner membrane. Its pathway is energy metabolism; oxidative phosphorylation. Component of the cytochrome c oxidase, the last enzyme in the mitochondrial electron transport chain which drives oxidative phosphorylation. The respiratory chain contains 3 multisubunit complexes succinate dehydrogenase (complex II, CII), ubiquinol-cytochrome c oxidoreductase (cytochrome b-c1 complex, complex III, CIII) and cytochrome c oxidase (complex IV, CIV), that cooperate to transfer electrons derived from NADH and succinate to molecular oxygen, creating an electrochemical gradient over the inner membrane that drives transmembrane transport and the ATP synthase. Cytochrome c oxidase is the component of the respiratory chain that catalyzes the reduction of oxygen to water. Electrons originating from reduced cytochrome c in the intermembrane space (IMS) are transferred via the dinuclear copper A center (CU(A)) of subunit 2 and heme A of subunit 1 to the active site in subunit 1, a binuclear center (BNC) formed by heme A3 and copper B (CU(B)). The BNC reduces molecular oxygen to 2 water molecules using 4 electrons from cytochrome c in the IMS and 4 protons from the mitochondrial matrix. The protein is Cytochrome c oxidase subunit 7A2, mitochondrial (COX7A2) of Ovis aries (Sheep).